Consider the following 320-residue polypeptide: 1-aminocyclopropane-1-carboxylate oxidase 2 (320 aa).

The stretch at 111-143 (DEYRTAMKDFGKRLENLAEDLLDLLCENLGLEK) forms a coiled coil. In terms of domain architecture, Fe2OG dioxygenase spans 156–256 (PTFGTKVSNY…RMSVASFYNP (101 aa)). 3 residues coordinate Fe cation: H180, D182, and H237. R247 contacts 2-oxoglutarate.

It belongs to the iron/ascorbate-dependent oxidoreductase family. It depends on Fe(2+) as a cofactor. The cofactor is Cu(2+). In terms of tissue distribution, expressed in vegetative tissues. Constitutively expressed in leaves and blades. In ethylene exposed etiolated seedlings, localized in cells at the outer side of the exaggerated hook in an ethylene-dependent manner and following an ethylene sensitive pattern. Also detected in the root tip when treated by ethylene.

It carries out the reaction 1-aminocyclopropane-1-carboxylate + L-ascorbate + O2 = ethene + L-dehydroascorbate + hydrogen cyanide + CO2 + 2 H2O. Its pathway is alkene biosynthesis; ethylene biosynthesis via S-adenosyl-L-methionine; ethylene from S-adenosyl-L-methionine: step 2/2. Its function is as follows. Enzyme involved in the ethylene biosynthesis. Required to mediate the 1-aminocyclopropane-1-carboxylic acid (ACC)-mediated reversion of the ABA-induced inhibition of seed germination via endosperm rupture. May promote stem elongation by maximizing the extensibility cells, possibly by activating ethylene biosynthesis, in response to very-long-chain fatty acids (VLCFAs C20:0 to C30:0). In Arabidopsis thaliana (Mouse-ear cress), this protein is 1-aminocyclopropane-1-carboxylate oxidase 2 (ACO2).